A 363-amino-acid chain; its full sequence is uncharacterized protein (363 aa).

29–36 (GSINSGKT) is a binding site for ATP.

This sequence belongs to the archaeal ATPase family.

This is an uncharacterized protein from Methanocaldococcus jannaschii (strain ATCC 43067 / DSM 2661 / JAL-1 / JCM 10045 / NBRC 100440) (Methanococcus jannaschii).